We begin with the raw amino-acid sequence, 887 residues long: Alanine--tRNA ligase (887 aa).

Zn(2+) contacts are provided by His564, His568, Cys675, and His679. Gly residues predominate over residues 851-866; it reads GQGGGGRPDMAQGGGP. The disordered stretch occupies residues 851-871; the sequence is GQGGGGRPDMAQGGGPDGDKA.

The protein belongs to the class-II aminoacyl-tRNA synthetase family. Zn(2+) serves as cofactor.

It localises to the cytoplasm. The enzyme catalyses tRNA(Ala) + L-alanine + ATP = L-alanyl-tRNA(Ala) + AMP + diphosphate. Catalyzes the attachment of alanine to tRNA(Ala) in a two-step reaction: alanine is first activated by ATP to form Ala-AMP and then transferred to the acceptor end of tRNA(Ala). Also edits incorrectly charged Ser-tRNA(Ala) and Gly-tRNA(Ala) via its editing domain. The chain is Alanine--tRNA ligase from Rhizorhabdus wittichii (strain DSM 6014 / CCUG 31198 / JCM 15750 / NBRC 105917 / EY 4224 / RW1) (Sphingomonas wittichii).